Reading from the N-terminus, the 749-residue chain is Transcription factor RFX3 (749 aa).

The RFX-type winged-helix DNA-binding region spans 183 to 258 (HLQWLLDNYE…YHYYGIRVKP (76 aa)). Residues 663–699 (VSPGNLDKDEGSEVESETDEDLDDSSEPRAKREKTEL) are disordered. The span at 674–687 (SEVESETDEDLDDS) shows a compositional bias: acidic residues. Basic and acidic residues predominate over residues 688-698 (SEPRAKREKTE).

This sequence belongs to the RFX family. In terms of assembly, heterodimer; heterodimerizes with RFX1 and RFX2, and RFX6. As to expression, expressed in ciliated cells of the node and in the ciliated ependymal cells of the subcommissural organ (SCO), choroid plexuses (CP) and ventricular walls during embryonic and postnatal development. Expressed in developing and mature pancreatic endocrine cells during embryogenesis and in adults (at protein level).

The protein resides in the nucleus. Its function is as follows. Transcription factor required for ciliogenesis and islet cell differentiation during endocrine pancreas development. Essential for the differentiation of nodal monocilia and left-right asymmetry specification during embryogenesis. Required for the biogenesis of motile cilia by governing growth and beating efficiency of motile cells. Also required for ciliated ependymal cell differentiation. Together with RFX6, participates in the differentiation of 4 of the 5 islet cell types during endocrine pancreas development, with the exception of pancreatic PP (polypeptide-producing) cells. Regulates transcription by forming a heterodimer with another RFX protein and binding to the X-box in the promoter of target genes. Regulates the expression of genes involved in ciliary assembly (DYNC2LI1, FOXJ1 and BBS4) and genes involved in ciliary motility (DNAH11, DNAH9 and DNAH5). Represses transcription of MAP1A in non-neuronal cells but not in neuronal cells. This Mus musculus (Mouse) protein is Transcription factor RFX3 (Rfx3).